Here is a 105-residue protein sequence, read N- to C-terminus: MVKQIESKSAFQEALNSAGEKLVVVDFSATWCGPCKMIKPFFHSLSEKYSNVVFLEVDVDDCQDVAAECEVKCMPTFQFFKKGQKVDEFSGANKEKLEATIKGLI.

In terms of domain architecture, Thioredoxin spans 2–103 (VKQIESKSAF…KEKLEATIKG (102 aa)). An N6-acetyllysine modification is found at K3. The residue at position 8 (K8) is an N6-succinyllysine. Active-site nucleophile residues include C32 and C35. Cysteines 32 and 35 form a disulfide. An N6-acetyllysine modification is found at K39. An S-nitrosocysteine mark is found at C62 and C69. An S-nitrosocysteine; alternate modification is found at C73. K94 is modified (N6-acetyllysine; alternate). K94 carries the N6-succinyllysine; alternate modification.

Belongs to the thioredoxin family. In terms of assembly, homodimer; disulfide-linked. Interacts with TXNIP through the redox-active site. Interacts with MAP3K5 and CASP3. Interacts with APEX1; the interaction stimulates the FOS/JUN AP-1 DNA-binding activity in a redox-dependent manner. In terms of processing, in the fully reduced protein, both Cys-69 and Cys-73 are nitrosylated in response to nitric oxide (NO). When two disulfide bonds are present in the protein, only Cys-73 is nitrosylated. Cys-73 can serve as donor for nitrosylation of target proteins.

It is found in the nucleus. It localises to the cytoplasm. The protein resides in the secreted. In terms of biological role, participates in various redox reactions through the reversible oxidation of its active center dithiol to a disulfide and catalyzes dithiol-disulfide exchange reactions. Plays a role in the reversible S-nitrosylation of cysteine residues in target proteins, and thereby contributes to the response to intracellular nitric oxide. Nitrosylates the active site Cys of CASP3 in response to nitric oxide (NO), and thereby inhibits caspase-3 activity. Induces the FOS/JUN AP-1 DNA binding activity in ionizing radiation (IR) cells through its oxidation/reduction status and stimulates AP-1 transcriptional activity. The sequence is that of Thioredoxin (TXN) from Equus caballus (Horse).